Here is a 321-residue protein sequence, read N- to C-terminus: uncharacterized protein (321 aa).

An N-terminal signal peptide occupies residues 1 to 22 (MKSIYKYTFMLFVFLFGTLMMA).

This sequence belongs to the bacterial solute-binding protein 1 family. WtpA subfamily.

This is an uncharacterized protein from Petrotoga mobilis (strain DSM 10674 / SJ95).